Consider the following 70-residue polypeptide: uncharacterized protein (70 aa).

Residues 14-34 (CLVVWFACVYSLLILVVLLLI) traverse the membrane as a helical segment.

The protein localises to the virion membrane. This is an uncharacterized protein from Homo sapiens (Human).